A 68-amino-acid polypeptide reads, in one-letter code: ATP synthase F(0) complex subunit 8 (68 aa).

Residues 8–24 (VWPTTITPMLLTLFLIT) traverse the membrane as a helical segment. Lysine 54 bears the N6-acetyllysine; alternate mark. N6-succinyllysine; alternate is present on lysine 54. An N6-acetyllysine modification is found at lysine 57.

The protein belongs to the ATPase protein 8 family. In terms of assembly, component of the ATP synthase complex composed at least of ATP5F1A/subunit alpha, ATP5F1B/subunit beta, ATP5MC1/subunit c (homooctomer), MT-ATP6/subunit a, MT-ATP8/subunit 8, ATP5ME/subunit e, ATP5MF/subunit f, ATP5MG/subunit g, ATP5MK/subunit k, ATP5MJ/subunit j, ATP5F1C/subunit gamma, ATP5F1D/subunit delta, ATP5F1E/subunit epsilon, ATP5PF/subunit F6, ATP5PB/subunit b, ATP5PD/subunit d, ATP5PO/subunit OSCP. ATP synthase complex consists of a soluble F(1) head domain (subunits alpha(3) and beta(3)) - the catalytic core - and a membrane F(0) domain - the membrane proton channel (subunits c, a, 8, e, f, g, k and j). These two domains are linked by a central stalk (subunits gamma, delta, and epsilon) rotating inside the F1 region and a stationary peripheral stalk (subunits F6, b, d, and OSCP). Interacts with PRICKLE3.

It localises to the mitochondrion membrane. In terms of biological role, subunit 8, of the mitochondrial membrane ATP synthase complex (F(1)F(0) ATP synthase or Complex V) that produces ATP from ADP in the presence of a proton gradient across the membrane which is generated by electron transport complexes of the respiratory chain. ATP synthase complex consist of a soluble F(1) head domain - the catalytic core - and a membrane F(1) domain - the membrane proton channel. These two domains are linked by a central stalk rotating inside the F(1) region and a stationary peripheral stalk. During catalysis, ATP synthesis in the catalytic domain of F(1) is coupled via a rotary mechanism of the central stalk subunits to proton translocation. In vivo, can only synthesize ATP although its ATP hydrolase activity can be activated artificially in vitro. Part of the complex F(0) domain. The chain is ATP synthase F(0) complex subunit 8 from Pan paniscus (Pygmy chimpanzee).